Here is a 457-residue protein sequence, read N- to C-terminus: Argininosuccinate lyase (457 aa).

The protein belongs to the lyase 1 family. Argininosuccinate lyase subfamily.

The protein resides in the cytoplasm. The catalysed reaction is 2-(N(omega)-L-arginino)succinate = fumarate + L-arginine. It participates in amino-acid biosynthesis; L-arginine biosynthesis; L-arginine from L-ornithine and carbamoyl phosphate: step 3/3. This chain is Argininosuccinate lyase, found in Psychrobacter cryohalolentis (strain ATCC BAA-1226 / DSM 17306 / VKM B-2378 / K5).